The primary structure comprises 290 residues: MAFVSMKELLEDAKREQYAIGQFNINGLQWTKAILQAAQKEQSPVIAAASDRLVDYLGGFKTIAAMVGALIEDMAITVPVVLHLDHGSSAERCRQAIDAGFSSVMIDGSHQPIDENIAMTKEVTDYAAKHGVSVEAEVGTVGGMEDGLVGGVRYADITECERIVKETNIDALAAALGSVHGKYQGEPNLGFKEMEAISRMTDIPLVLHGASGIPQDQIKKAITLGHAKININTECMVAWTDETRRMFQENSDLYEPRGYLTPGIEAVEETVRSKMREFGSAGKAAKQQVG.

The active-site Proton donor is the D85. Residues H86 and H180 each contribute to the Zn(2+) site. G181 is a binding site for dihydroxyacetone phosphate. Position 208 (H208) interacts with Zn(2+). Residues 209–211 and 230–233 contribute to the dihydroxyacetone phosphate site; these read GAS and NINT. Position 233 is a phosphothreonine (T233).

It belongs to the class II fructose-bisphosphate aldolase family. IolJ subfamily. The cofactor is Zn(2+).

The enzyme catalyses 6-phospho-5-dehydro-2-deoxy-D-gluconate = 3-oxopropanoate + dihydroxyacetone phosphate. Its pathway is polyol metabolism; myo-inositol degradation into acetyl-CoA; acetyl-CoA from myo-inositol: step 6/7. In terms of biological role, produces dihydroxyacetone phosphate (DHAP or glycerone phosphate) and malonic semialdehyde (MSA or 3-oxopropanoate) from 6-phospho-5-dehydro-2-deoxy-D-gluconate (DKGP). This chain is 6-phospho-5-dehydro-2-deoxy-D-gluconate aldolase (iolJ), found in Bacillus subtilis (strain 168).